We begin with the raw amino-acid sequence, 294 residues long: Acetyl-coenzyme A carboxylase carboxyl transferase subunit beta (294 aa).

Residues 29 to 294 enclose the CoA carboxyltransferase N-terminal domain; it reads LWEKCPECGQ…TQEVKLQTNA (266 aa). Residues C33, C36, C52, and C55 each contribute to the Zn(2+) site. The C4-type zinc-finger motif lies at 33–55; that stretch reads CPECGQVVYRKDLIDNCSVCSNC.

This sequence belongs to the AccD/PCCB family. In terms of assembly, acetyl-CoA carboxylase is a heterohexamer composed of biotin carboxyl carrier protein (AccB), biotin carboxylase (AccC) and two subunits each of ACCase subunit alpha (AccA) and ACCase subunit beta (AccD). It depends on Zn(2+) as a cofactor.

The protein localises to the cytoplasm. The enzyme catalyses N(6)-carboxybiotinyl-L-lysyl-[protein] + acetyl-CoA = N(6)-biotinyl-L-lysyl-[protein] + malonyl-CoA. Its pathway is lipid metabolism; malonyl-CoA biosynthesis; malonyl-CoA from acetyl-CoA: step 1/1. Functionally, component of the acetyl coenzyme A carboxylase (ACC) complex. Biotin carboxylase (BC) catalyzes the carboxylation of biotin on its carrier protein (BCCP) and then the CO(2) group is transferred by the transcarboxylase to acetyl-CoA to form malonyl-CoA. This chain is Acetyl-coenzyme A carboxylase carboxyl transferase subunit beta, found in Prochlorococcus marinus (strain NATL1A).